The primary structure comprises 590 residues: Leucine-rich repeat transmembrane neuronal protein 4 (590 aa).

Positions 1–30 (MGFRLITQLKGMSVFLVLFPTLLLVMLTGA) are cleaved as a signal peptide. Residues 31 to 61 (QRACPKNCRCDGKIVYCESHAFADIPENISG) enclose the LRRNT domain. Residues 31–424 (QRACPKNCRC…HEYEHVSFHK (394 aa)) lie on the Extracellular side of the membrane. Asparagine 58 carries an N-linked (GlcNAc...) asparagine glycan. 10 LRR repeats span residues 62 to 83 (GSQGLSLRFNSIQKLKSNQFAG), 86 to 107 (QLIWLYLDHNYISSVDEDAFQG), 110 to 131 (RLKELILSSNKITYLHNKTFHP), 134 to 155 (NLRNLDLSYNKLQTLQSEQFKG), 158 to 179 (KLIILHLRSNSLKTVPIRVFQD), 182 to 203 (NLDFLDLGYNRLRSLSRNAFAG), 206 to 226 (KLKELHLEHNQFSKINFAHFP), 230 to 251 (NLRSIYLQWNRIRSVSQGLTWT), 254 to 275 (SLHTLDLSGNDIQAIEPGTFKC), and 278 to 299 (NLQKLNLDSNKLTNVSQETVNA). The N-linked (GlcNAc...) asparagine glycan is linked to asparagine 126. A glycan (N-linked (GlcNAc...) asparagine) is linked at asparagine 291. An LRRCT domain is found at 311 to 362 (NMWECSRSICPLFYWLKNFKGNKESTMICAGPKHIQGEKVSDAVETYNICSD). Residues 425 to 445 (IIAGSVALFLSVAMILLVIYV) form a helical membrane-spanning segment. The Cytoplasmic portion of the chain corresponds to 446–590 (SWKRYPASMK…PAIYLERITN (145 aa)).

This sequence belongs to the LRRTM family. Peripherally associated with AMPAR complex. AMPAR complex consists of an inner core made of 4 pore-forming GluA/GRIA proteins (GRIA1, GRIA2, GRIA3 and GRIA4) and 4 major auxiliary subunits arranged in a twofold symmetry. One of the two pairs of distinct binding sites is occupied either by CNIH2, CNIH3 or CACNG2, CACNG3. The other harbors CACNG2, CACNG3, CACNG4, CACNG8 or GSG1L. This inner core of AMPAR complex is complemented by outer core constituents binding directly to the GluA/GRIA proteins at sites distinct from the interaction sites of the inner core constituents. Outer core constituents include at least PRRT1, PRRT2, CKAMP44/SHISA9, FRRS1L and NRN1. The proteins of the inner and outer core serve as a platform for other, more peripherally associated AMPAR constituents, including LRRTM4. Alone or in combination, these auxiliary subunits control the gating and pharmacology of the AMPAR complex and profoundly impact their biogenesis and protein processing. As to expression, predominantly in the brain (at protein level). Also expressed in the cerebellum and other tissues.

The protein resides in the cell membrane. It is found in the postsynaptic cell membrane. Functionally, may play a role in the development and maintenance of the vertebrate nervous system. Exhibits strong synaptogenic activity, restricted to excitatory presynaptic differentiation. The protein is Leucine-rich repeat transmembrane neuronal protein 4 (Lrrtm4) of Mus musculus (Mouse).